A 110-amino-acid chain; its full sequence is MRSKVEILPSTLIFHELIGLEIKVSNSTNPSLIGIRGRVINETKNMLVVENSESRELKIPKADSEFVFRIPAELSEKGRRSDIFVKIQGNLLLSQPENRIKNIKKLRKWG.

This sequence belongs to the eukaryotic/archaeal RNase P protein component 1 family. Consists of a catalytic RNA component and at least 4-5 protein subunits.

Its subcellular location is the cytoplasm. The catalysed reaction is Endonucleolytic cleavage of RNA, removing 5'-extranucleotides from tRNA precursor.. Functionally, part of ribonuclease P, a protein complex that generates mature tRNA molecules by cleaving their 5'-ends. The chain is Ribonuclease P protein component 1 from Methanosarcina mazei (strain ATCC BAA-159 / DSM 3647 / Goe1 / Go1 / JCM 11833 / OCM 88) (Methanosarcina frisia).